Here is a 184-residue protein sequence, read N- to C-terminus: TATA-box-binding protein (184 aa).

Tandem repeats lie at residues 9–85 (IENI…IDKL) and 100–178 (VQNI…KKEL).

This sequence belongs to the TBP family.

Its function is as follows. General factor that plays a role in the activation of archaeal genes transcribed by RNA polymerase. Binds specifically to the TATA box promoter element which lies close to the position of transcription initiation. The sequence is that of TATA-box-binding protein from Thermoplasma volcanium (strain ATCC 51530 / DSM 4299 / JCM 9571 / NBRC 15438 / GSS1).